We begin with the raw amino-acid sequence, 357 residues long: 3-isopropylmalate dehydrogenase (357 aa).

An NAD(+)-binding site is contributed by 76–89 (GPQWDTIDPALRPE). 4 residues coordinate substrate: arginine 96, arginine 106, arginine 134, and aspartate 224. Mg(2+) is bound by residues aspartate 224, aspartate 248, and aspartate 252. 282 to 294 (GSAPDIAGQGVAN) contributes to the NAD(+) binding site.

Belongs to the isocitrate and isopropylmalate dehydrogenases family. LeuB type 1 subfamily. Homodimer. The cofactor is Mg(2+). Mn(2+) is required as a cofactor.

It localises to the cytoplasm. It carries out the reaction (2R,3S)-3-isopropylmalate + NAD(+) = 4-methyl-2-oxopentanoate + CO2 + NADH. It functions in the pathway amino-acid biosynthesis; L-leucine biosynthesis; L-leucine from 3-methyl-2-oxobutanoate: step 3/4. Its function is as follows. Catalyzes the oxidation of 3-carboxy-2-hydroxy-4-methylpentanoate (3-isopropylmalate) to 3-carboxy-4-methyl-2-oxopentanoate. The product decarboxylates to 4-methyl-2 oxopentanoate. This is 3-isopropylmalate dehydrogenase from Xylella fastidiosa (strain Temecula1 / ATCC 700964).